The primary structure comprises 543 residues: Glucose transporter HT1 (543 aa).

Residues 1 to 24 (MPEYPTEDTNASGKTSGSSPDDHT) are disordered. Over 1–38 (MPEYPTEDTNASGKTSGSSPDDHTDDNAPSFFSCENLC) the chain is Cytoplasmic. Residues 7–19 (EDTNASGKTSGSS) show a composition bias toward polar residues. Residues 39–59 (IVQVPVSTGSLNGFSIGFVAV) traverse the membrane as a helical segment. The Extracellular segment spans residues 60 to 120 (YMHLYEIFSG…GSGYNSLESG (61 aa)). Residues N90 and N91 are each glycosylated (N-linked (GlcNAc...) asparagine). A helical transmembrane segment spans residues 121–141 (LFACSMIVGSMIGSIFAGKFL). At 142 to 147 (SKFGLK) the chain is on the cytoplasmic side. The chain crosses the membrane as a helical span at residues 148–168 (MSFIVSGVLGIVGSALIHVAT). At 169 to 172 (RGST) the chain is on the extracellular side. Residues 173 to 193 (LWVMCVGRFLMGLVLGLVCVA) form a helical membrane-spanning segment. Residues 194-212 (SPMYVNENAHPKYRKTIGV) are Cytoplasmic-facing. Residues 213-233 (LFQVFTTFGIMFAALLGLAIV) form a helical membrane-spanning segment. The Extracellular portion of the chain corresponds to 234–248 (KTPGHDKASGLLWRM). Residues 249–269 (QVFCSVSTALSALLLVLGLVV) form a helical membrane-spanning segment. The Cytoplasmic segment spans residues 270-300 (RKSKTSFAGGVDSAGEGVLDPNEYSVRQMLG). A helical membrane pass occupies residues 301–321 (PLAVGAVTAGTLQLTGINAVM). The Extracellular portion of the chain corresponds to 322–337 (NYAPEIMRNIGMDPME). Residues 338-358 (GNSAVMSWNFVTALVAIPLVS) traverse the membrane as a helical segment. Over 359-364 (RFTMRQ) the chain is Cytoplasmic. A helical transmembrane segment spans residues 365-385 (LFLACSFMASCACLIMCGIPV). Over 386 to 400 (YPGVASVDNRNIVAT) the chain is Extracellular. A helical transmembrane segment spans residues 401 to 421 (VGIAVFIAAFEFGVGSCFFVL). Residues 422-436 (AQDLFPRSFRPTGSS) are Cytoplasmic-facing. The helical transmembrane segment at 437 to 457 (FVVMAQFIFNIMINLLYPITV) threads the bilayer. Over 458-470 (EAISGGKGKSPEK) the chain is Extracellular. The helical transmembrane segment at 471 to 491 (GQSVSFIIFGIIGIICFVLQL) threads the bilayer. At 492-543 (RYLTPWEDGQGTSTSPTARCNAPTSPNNGEGEPATADMSPVEMSTPKHSGAA) the chain is on the cytoplasmic side. Residues 503 to 519 (TSTSPTARCNAPTSPNN) are compositionally biased toward polar residues. The tract at residues 503–543 (TSTSPTARCNAPTSPNNGEGEPATADMSPVEMSTPKHSGAA) is disordered.

It belongs to the major facilitator superfamily. Sugar transporter (TC 2.A.1.1) family.

It localises to the membrane. In terms of biological role, facilitative glucose transporter. Binds D-fructose and cytochalasin-B, but not D-galactose. This is Glucose transporter HT1 (HT1) from Trypanosoma vivax (Duttonella vivax).